The following is a 360-amino-acid chain: 8-hydroxygeraniol dehydrogenase (360 aa).

Zn(2+) is bound by residues Cys-50, His-72, Cys-103, Cys-106, Cys-109, Cys-117, and Cys-166.

Belongs to the zinc-containing alcohol dehydrogenase family. Zn(2+) is required as a cofactor. Present in seedlings and vascular tissues (at protein level). Restricted to the epidermis.

It carries out the reaction (6E)-8-hydroxygeraniol + 2 NADP(+) = (6E)-8-oxogeranial + 2 NADPH + 2 H(+). Functionally, dehydrogenase involved in the biosynthesis of oxogeranial from hydroxygeraniol, a precursor of the terpenoid indole alkaloids such as vinblastine and vincristine. This is 8-hydroxygeraniol dehydrogenase (10HGO) from Catharanthus roseus (Madagascar periwinkle).